The sequence spans 221 residues: Protein-L-isoaspartate O-methyltransferase (221 aa).

Serine 70 is a catalytic residue.

Belongs to the methyltransferase superfamily. L-isoaspartyl/D-aspartyl protein methyltransferase family.

It is found in the cytoplasm. The enzyme catalyses [protein]-L-isoaspartate + S-adenosyl-L-methionine = [protein]-L-isoaspartate alpha-methyl ester + S-adenosyl-L-homocysteine. In terms of biological role, catalyzes the methyl esterification of L-isoaspartyl residues in peptides and proteins that result from spontaneous decomposition of normal L-aspartyl and L-asparaginyl residues. It plays a role in the repair and/or degradation of damaged proteins. The chain is Protein-L-isoaspartate O-methyltransferase from Alkalilimnicola ehrlichii (strain ATCC BAA-1101 / DSM 17681 / MLHE-1).